Reading from the N-terminus, the 261-residue chain is Hemin import ATP-binding protein HmuV (261 aa).

The ABC transporter domain occupies 8–243 (IRVTDLSYSV…ESIRTAYGHE (236 aa)). ATP is bound at residue 40–47 (GRNGAGKS).

The protein belongs to the ABC transporter superfamily. Heme (hemin) importer (TC 3.A.1.14.5) family. As to quaternary structure, the complex is composed of two ATP-binding proteins (HmuV), two transmembrane proteins (HmuU) and a solute-binding protein (HmuT).

It is found in the cell membrane. In terms of biological role, part of the ABC transporter complex HmuTUV involved in hemin import. Responsible for energy coupling to the transport system. The protein is Hemin import ATP-binding protein HmuV of Deinococcus radiodurans (strain ATCC 13939 / DSM 20539 / JCM 16871 / CCUG 27074 / LMG 4051 / NBRC 15346 / NCIMB 9279 / VKM B-1422 / R1).